The chain runs to 279 residues: Rhamnulose-1-phosphate aldolase (279 aa).

Residue E115 is part of the active site. Residues H138, H140, and H209 each coordinate Zn(2+).

The protein belongs to the aldolase class II family. RhaD subfamily. Requires Zn(2+) as cofactor.

The protein localises to the cytoplasm. It catalyses the reaction L-rhamnulose 1-phosphate = (S)-lactaldehyde + dihydroxyacetone phosphate. It functions in the pathway carbohydrate degradation; L-rhamnose degradation; glycerone phosphate from L-rhamnose: step 3/3. Its function is as follows. Catalyzes the reversible cleavage of L-rhamnulose-1-phosphate to dihydroxyacetone phosphate (DHAP) and L-lactaldehyde. This is Rhamnulose-1-phosphate aldolase from Enterococcus faecalis (strain ATCC 700802 / V583).